We begin with the raw amino-acid sequence, 713 residues long: Macrophage-expressed gene 1 protein (713 aa).

Positions 1–19 (MNSFMALVLIWMIIACAEA) are cleaved as a signal peptide. Residues 30–345 (GFQICKNALK…TAVRHYYTFN (316 aa)) form the MACPF domain. The cysteines at positions 34 and 70 are disulfide-linked. Beta stranded transmembrane passes span 113-120 (LSINTELA) and 127-132 (GKFSTE). Residue asparagine 185 is glycosylated (N-linked (GlcNAc...) asparagine). Transmembrane regions (beta stranded) follow at residues 235–244 (TVTASAGIAF) and 248–256 (VNFKVETDY). Asparagine 269 carries an N-linked (GlcNAc...) asparagine glycan. Cysteines 350 and 369 form a disulfide. An N-linked (GlcNAc...) asparagine glycan is attached at asparagine 375. Intrachain disulfides connect cysteine 385-cysteine 394, cysteine 432-cysteine 446, cysteine 436-cysteine 442, cysteine 531-cysteine 569, and cysteine 554-cysteine 574. The tract at residues 410-653 (PPGYSPVHLL…GDSNGMSGGE (244 aa)) is P2. The helical transmembrane segment at 654–674 (AAGITLGVTIALGIVITLAIY) threads the bilayer.

It belongs to the MPEG1 family. In terms of assembly, homooligomer; predominantly forms a homooligomeric arc-shaped pore complex instead of complete rings of 16 subunits. Post-translationally, proteolytically processed in two steps to generate the Macrophage-expressed gene 1 protein, processed form: cleaved by trypsin in proximity of the helical transmembrane domain releases the ectodomain into the lysosomal lumen to orient the pore-forming domain toward the endogenous membranes, and processed by the asparagine endopeptidase (LGMN). Proteolytic processing in antigen-containing vesicles is pH-dependent. Monoubiquitinated in response to bacterial infection; ubiquitination is required for vesicular localization and antibacterial activity and can be blocked by bacterial cell cycle inhibiting factor (cif). As to expression, expressed constitutively in a variety of cell types including macrophages, microglia, neutrophils, T cells, marginal zone B cells, keratinocytes, splenocytes and intestinal epithelial cells.

The protein resides in the cytoplasmic vesicle membrane. It localises to the cytoplasmic vesicle. It is found in the phagosome membrane. Its activity is regulated as follows. Forms arc- and ring-shaped pre-pores on top of the membrane at neutral to slightly acidic pH conditions and converts to pores upon acidification. Undergoes transition from the pre-pore to the pore in a processive clockwise hand-over-hand process. In the pore state, 2 alpha-helical regions refold into transmembrane hairpins (TMH1 and TMH2) in each protomer that form in the ensemble complex giant beta-barrel transmembrane pores. Functionally, pore-forming protein involved in both innate and adaptive immunity. Plays a central role in antigen cross-presentation in dendritic cells by forming a pore in antigen-containing compartments, thereby promoting delivery of antigens for cross-presentation. Also involved in innate immune response following bacterial infection; shows antibacterial activity against a wide spectrum of Gram-positive, Gram-negative and acid-fast bacteria. Reduces the viability of the intracytosolic pathogen L.monocytogenes by inhibiting acidification of the phagocytic vacuole of host cells which restricts bacterial translocation from the vacuole to the cytosol. Required for the antibacterial activity of reactive oxygen species and nitric oxide. In terms of biological role, pore-forming protein that plays a central role in antigen cross-presentation in dendritic cells by mediating delivery of antigens for cross-presentation. Dendritic cells bridge innate and adaptive immunity by capturing exogenous antigens on MHC class-I molecules and presenting them to naive CD8(+) T-cells. Acts by forming a pore in antigen-containing compartments, promoting the release of antigens into the cytosol, enabling generation of MHCI:peptide complexes and T-cell priming. This is Macrophage-expressed gene 1 protein from Mus musculus (Mouse).